Consider the following 138-residue polypeptide: Large-conductance mechanosensitive channel (138 aa).

Transmembrane regions (helical) follow at residues 15–35, 38–58, and 80–100; these read VDLAVGVIIGSAFGGLVNSVV, IFMPIIGLITGGIDFSNMFIQ, and GNFITLLINFLIISWILFFLV.

The protein belongs to the MscL family. Homopentamer.

The protein resides in the cell inner membrane. Functionally, channel that opens in response to stretch forces in the membrane lipid bilayer. May participate in the regulation of osmotic pressure changes within the cell. This Bartonella bacilliformis (strain ATCC 35685 / KC583 / Herrer 020/F12,63) protein is Large-conductance mechanosensitive channel.